The following is a 198-amino-acid chain: Recombination protein RecR (198 aa).

A C4-type zinc finger spans residues 57–72 (CSVCGHITDQDPCAIC). The Toprim domain occupies 80–175 (SLICVVQDPK…RTTRIAHGLP (96 aa)).

Belongs to the RecR family.

In terms of biological role, may play a role in DNA repair. It seems to be involved in an RecBC-independent recombinational process of DNA repair. It may act with RecF and RecO. This chain is Recombination protein RecR, found in Oceanobacillus iheyensis (strain DSM 14371 / CIP 107618 / JCM 11309 / KCTC 3954 / HTE831).